We begin with the raw amino-acid sequence, 142 residues long: Thioredoxin-like protein 4A (142 aa).

A disulfide bridge links C38 with C79. S132 is subject to Phosphoserine.

The protein belongs to the DIM1 family. As to quaternary structure, component of the precatalytic spliceosome (spliceosome B complex). Component of the U5 snRNP complex. Component of the U4/U6-U5 tri-snRNP complex. The U4/U6-U5 tri-snRNP complex is a building block of the precatalytic spliceosome (spliceosome B complex). The U4/U6-U5 tri-snRNP complex is composed of the U4, U6 and U5 snRNAs and at least PRPF3, PRPF4, PRPF6, PRPF8, PRPF31, SNRNP200, TXNL4A, SNRNP40, SNRPB, SNRPD1, SNRPD2, SNRPD3, SNRPE, SNRPF, SNRPG, DDX23, CD2BP2, PPIH, SNU13, EFTUD2, SART1 and USP39, plus LSM2, LSM3, LSM4, LSM5, LSM6, LSM7 and LSM8. Directly interacts with CD2BP2. Interacts with HNRPF, HNRPH2, NEDD9 and PQBP1. Interacts with ERBB4. Post-translationally, the disulfide bond seen in structures determined by X-ray crystallography and NMR is not essential for protein folding and function.

The protein localises to the nucleus. Its function is as follows. Plays a role in pre-mRNA splicing as component of the U5 snRNP and U4/U6-U5 tri-snRNP complexes that are involved in spliceosome assembly, and as component of the precatalytic spliceosome (spliceosome B complex). This Homo sapiens (Human) protein is Thioredoxin-like protein 4A (TXNL4A).